The following is a 497-amino-acid chain: Membrane-bound lytic murein transglycosylase F (497 aa).

The N-terminal stretch at 1-29 is a signal peptide; that stretch reads MFFRPDFRPRCAKWLIATGLFLMLGACVE. The segment at 30–267 is non-LT domain; it reads KPTTLERVKE…RLKDRYYGHV (238 aa). An LT domain region spans residues 268-497; that stretch reads DVLGYVGAYT…PASSPEKPAL (230 aa). Residue Glu314 is part of the active site. The disordered stretch occupies residues 464–497; the sequence is VADGNLHVPGVDKTQPPAPTAPVVPASSPEKPAL. Over residues 486–497 the composition is skewed to low complexity; the sequence is VVPASSPEKPAL.

The protein in the N-terminal section; belongs to the bacterial solute-binding protein 3 family. This sequence in the C-terminal section; belongs to the transglycosylase Slt family.

The protein localises to the cell outer membrane. The catalysed reaction is Exolytic cleavage of the (1-&gt;4)-beta-glycosidic linkage between N-acetylmuramic acid (MurNAc) and N-acetylglucosamine (GlcNAc) residues in peptidoglycan, from either the reducing or the non-reducing ends of the peptidoglycan chains, with concomitant formation of a 1,6-anhydrobond in the MurNAc residue.. Its function is as follows. Murein-degrading enzyme that degrades murein glycan strands and insoluble, high-molecular weight murein sacculi, with the concomitant formation of a 1,6-anhydromuramoyl product. Lytic transglycosylases (LTs) play an integral role in the metabolism of the peptidoglycan (PG) sacculus. Their lytic action creates space within the PG sacculus to allow for its expansion as well as for the insertion of various structures such as secretion systems and flagella. The protein is Membrane-bound lytic murein transglycosylase F of Pseudomonas syringae pv. tomato (strain ATCC BAA-871 / DC3000).